The primary structure comprises 170 residues: Ribosome maturation factor RimM (170 aa).

The PRC barrel domain occupies 97-170 (KNEFYWTDLI…QIRVEWGSDW (74 aa)).

The protein belongs to the RimM family. As to quaternary structure, binds ribosomal protein uS19.

The protein localises to the cytoplasm. An accessory protein needed during the final step in the assembly of 30S ribosomal subunit, possibly for assembly of the head region. Essential for efficient processing of 16S rRNA. May be needed both before and after RbfA during the maturation of 16S rRNA. It has affinity for free ribosomal 30S subunits but not for 70S ribosomes. This is Ribosome maturation factor RimM from Dechloromonas aromatica (strain RCB).